Reading from the N-terminus, the 297-residue chain is Protease HtpX homolog (297 aa).

Residues 16 to 36 (IFMAIGFLVGGMAGMILAFVV) traverse the membrane as a helical segment. H134 provides a ligand contact to Zn(2+). E135 is a catalytic residue. H138 serves as a coordination point for Zn(2+). A run of 2 helical transmembrane segments spans residues 147–167 (MTVTATLAGAIGMLANFALFF) and 175–195 (IGSIAIMIFAPMAAALVQMAI). Position 200 (E200) interacts with Zn(2+).

The protein belongs to the peptidase M48B family. Requires Zn(2+) as cofactor.

It localises to the cell inner membrane. This chain is Protease HtpX homolog, found in Hyphomonas neptunium (strain ATCC 15444).